The sequence spans 127 residues: MARIAGVDLPRNKYINIALTYIFGIGNSRAKAILAEANVEANRKVSDLNEEEVNRIRTAIENGSSVEGDLRKDVSMHIKRLIEIGSYRGYRHRRSLPVRGQRTHTNARTRKGPRKGTVANKKKATAK.

A disordered region spans residues 93 to 127; sequence RRSLPVRGQRTHTNARTRKGPRKGTVANKKKATAK.

This sequence belongs to the universal ribosomal protein uS13 family. As to quaternary structure, part of the 30S ribosomal subunit. Forms a loose heterodimer with protein S19. Forms two bridges to the 50S subunit in the 70S ribosome.

In terms of biological role, located at the top of the head of the 30S subunit, it contacts several helices of the 16S rRNA. In the 70S ribosome it contacts the 23S rRNA (bridge B1a) and protein L5 of the 50S subunit (bridge B1b), connecting the 2 subunits; these bridges are implicated in subunit movement. Contacts the tRNAs in the A and P-sites. This is Small ribosomal subunit protein uS13 from Koribacter versatilis (strain Ellin345).